Reading from the N-terminus, the 251-residue chain is Triosephosphate isomerase (251 aa).

Substrate is bound at residue 9–11 (NWK). The active-site Electrophile is histidine 95. Glutamate 167 (proton acceptor) is an active-site residue. Substrate contacts are provided by residues glycine 173, serine 213, and 234-235 (GG). A Phosphoserine modification is found at serine 213.

It belongs to the triosephosphate isomerase family. Homodimer.

Its subcellular location is the cytoplasm. It catalyses the reaction D-glyceraldehyde 3-phosphate = dihydroxyacetone phosphate. The protein operates within carbohydrate biosynthesis; gluconeogenesis. Its pathway is carbohydrate degradation; glycolysis; D-glyceraldehyde 3-phosphate from glycerone phosphate: step 1/1. Its function is as follows. Involved in the gluconeogenesis. Catalyzes stereospecifically the conversion of dihydroxyacetone phosphate (DHAP) to D-glyceraldehyde-3-phosphate (G3P). The sequence is that of Triosephosphate isomerase from Bacillus cereus (strain AH820).